A 194-amino-acid chain; its full sequence is Peroxisomal membrane protein 2 (194 aa).

Topologically, residues 2–30 (APAASRLRVESELRSLPKRALAQYLLFLK) are cytoplasmic. Residues 31–51 (FYPVVTKAVSSGILSALGNLL) form a helical membrane-spanning segment. The Peroxisomal segment spans residues 52–74 (AQMIEKKQKKDSRSLEVSGLLRY). A helical membrane pass occupies residues 75-95 (LVYGLFVTGPLSHYLYLFMEY). The Cytoplasmic portion of the chain corresponds to 96–113 (WVPPEVPWARVKRLLLDR). Residues 114 to 134 (LFFAPTFLLLFFFVMNLLEGK) traverse the membrane as a helical segment. At 135–172 (NISVFVAKMRSGFWPALQMNWRMWTPLQFININYVPLQ) the chain is on the peroxisomal side. The helical transmembrane segment at 173 to 193 (FRVLFANMAALFWYAYLASLG) threads the bilayer.

Belongs to the peroxisomal membrane protein PXMP2/4 family. In terms of assembly, interacts with PEX19 and SIVA1.

The protein localises to the peroxisome membrane. Seems to be involved in pore-forming activity and may contribute to the unspecific permeability of the peroxisomal membrane. In Rattus norvegicus (Rat), this protein is Peroxisomal membrane protein 2 (Pxmp2).